We begin with the raw amino-acid sequence, 130 residues long: Small ribosomal subunit protein uS9 (130 aa).

Belongs to the universal ribosomal protein uS9 family.

This is Small ribosomal subunit protein uS9 from Paraburkholderia phytofirmans (strain DSM 17436 / LMG 22146 / PsJN) (Burkholderia phytofirmans).